A 223-amino-acid chain; its full sequence is Endonuclease V (223 aa).

Mg(2+)-binding residues include D44 and D109.

Belongs to the endonuclease V family. The cofactor is Mg(2+).

The protein localises to the cytoplasm. The enzyme catalyses Endonucleolytic cleavage at apurinic or apyrimidinic sites to products with a 5'-phosphate.. Its function is as follows. DNA repair enzyme involved in the repair of deaminated bases. Selectively cleaves double-stranded DNA at the second phosphodiester bond 3' to a deoxyinosine leaving behind the intact lesion on the nicked DNA. This is Endonuclease V from Methanothrix thermoacetophila (strain DSM 6194 / JCM 14653 / NBRC 101360 / PT) (Methanosaeta thermophila).